We begin with the raw amino-acid sequence, 155 residues long: Transcriptional repressor NrdR (155 aa).

Residues 3–34 (CPFCQHDDTQVLDTRVSEEGDSIRRRRRCTSC) fold into a zinc finger. An ATP-cone domain is found at 49 to 139 (PVVVKKNGSR…VYKSFEDVAE (91 aa)).

Belongs to the NrdR family. Zn(2+) serves as cofactor.

Negatively regulates transcription of bacterial ribonucleotide reductase nrd genes and operons by binding to NrdR-boxes. This Janthinobacterium sp. (strain Marseille) (Minibacterium massiliensis) protein is Transcriptional repressor NrdR.